A 105-amino-acid chain; its full sequence is Large ribosomal subunit protein uL24 (105 aa).

Belongs to the universal ribosomal protein uL24 family. As to quaternary structure, part of the 50S ribosomal subunit.

Functionally, one of two assembly initiator proteins, it binds directly to the 5'-end of the 23S rRNA, where it nucleates assembly of the 50S subunit. One of the proteins that surrounds the polypeptide exit tunnel on the outside of the subunit. The chain is Large ribosomal subunit protein uL24 from Novosphingobium aromaticivorans (strain ATCC 700278 / DSM 12444 / CCUG 56034 / CIP 105152 / NBRC 16084 / F199).